A 332-amino-acid chain; its full sequence is Ketol-acid reductoisomerase (NADP(+)) 1 (332 aa).

One can recognise a KARI N-terminal Rossmann domain in the interval 2 to 182; sequence AELFYDADAD…GGTRAGVIKT (181 aa). Residues 25–28, serine 51, serine 53, and 83–86 each bind NADP(+); these read YGSQ and DPIQ. Histidine 108 is a catalytic residue. NADP(+) is bound at residue glycine 134. The KARI C-terminal knotted domain occupies 183–328; sequence TFTEETETDL…KELRKLMSWV (146 aa). Residues aspartate 191, glutamate 195, glutamate 227, and glutamate 231 each contribute to the Mg(2+) site. A substrate-binding site is contributed by serine 252.

Belongs to the ketol-acid reductoisomerase family. It depends on Mg(2+) as a cofactor.

The catalysed reaction is (2R)-2,3-dihydroxy-3-methylbutanoate + NADP(+) = (2S)-2-acetolactate + NADPH + H(+). The enzyme catalyses (2R,3R)-2,3-dihydroxy-3-methylpentanoate + NADP(+) = (S)-2-ethyl-2-hydroxy-3-oxobutanoate + NADPH + H(+). The protein operates within amino-acid biosynthesis; L-isoleucine biosynthesis; L-isoleucine from 2-oxobutanoate: step 2/4. Its pathway is amino-acid biosynthesis; L-valine biosynthesis; L-valine from pyruvate: step 2/4. Its function is as follows. Involved in the biosynthesis of branched-chain amino acids (BCAA). Catalyzes an alkyl-migration followed by a ketol-acid reduction of (S)-2-acetolactate (S2AL) to yield (R)-2,3-dihydroxy-isovalerate. In the isomerase reaction, S2AL is rearranged via a Mg-dependent methyl migration to produce 3-hydroxy-3-methyl-2-ketobutyrate (HMKB). In the reductase reaction, this 2-ketoacid undergoes a metal-dependent reduction by NADPH to yield (R)-2,3-dihydroxy-isovalerate. The polypeptide is Ketol-acid reductoisomerase (NADP(+)) 1 (Streptomyces coelicolor (strain ATCC BAA-471 / A3(2) / M145)).